A 518-amino-acid chain; its full sequence is 2-isopropylmalate synthase (518 aa).

The Pyruvate carboxyltransferase domain occupies I5–I269. 4 residues coordinate Mn(2+): D14, H204, H206, and N240. Positions E397–R518 are regulatory domain.

It belongs to the alpha-IPM synthase/homocitrate synthase family. LeuA type 1 subfamily. Homodimer. The cofactor is Mn(2+).

Its subcellular location is the cytoplasm. It catalyses the reaction 3-methyl-2-oxobutanoate + acetyl-CoA + H2O = (2S)-2-isopropylmalate + CoA + H(+). The protein operates within amino-acid biosynthesis; L-leucine biosynthesis; L-leucine from 3-methyl-2-oxobutanoate: step 1/4. Catalyzes the condensation of the acetyl group of acetyl-CoA with 3-methyl-2-oxobutanoate (2-ketoisovalerate) to form 3-carboxy-3-hydroxy-4-methylpentanoate (2-isopropylmalate). This chain is 2-isopropylmalate synthase, found in Geobacillus sp. (strain Y412MC10).